A 414-amino-acid polypeptide reads, in one-letter code: Translation initiation factor 2 subunit gamma (414 aa).

The region spanning 7-204 (QPEVNIGLVG…ALQTEIATPD (198 aa)) is the tr-type G domain. The segment at 16–23 (GHVDHGKT) is G1. Mg(2+) contacts are provided by D19, T23, G44, and S46. 19–24 (DHGKTT) provides a ligand contact to GTP. The G2 stretch occupies residues 44 to 48 (GISIR). Positions 91–94 (DAPG) are G3. GTP is bound by residues 147-150 (NKVD) and 182-184 (SAE). The G4 stretch occupies residues 147-150 (NKVD). The tract at residues 182–184 (SAE) is G5.

It belongs to the TRAFAC class translation factor GTPase superfamily. Classic translation factor GTPase family. EIF2G subfamily. As to quaternary structure, heterotrimer composed of an alpha, a beta and a gamma chain. The cofactor is Mg(2+).

The enzyme catalyses GTP + H2O = GDP + phosphate + H(+). EIF-2 functions in the early steps of protein synthesis by forming a ternary complex with GTP and initiator tRNA. This chain is Translation initiation factor 2 subunit gamma, found in Halobacterium salinarum (strain ATCC 29341 / DSM 671 / R1).